Here is an 883-residue protein sequence, read N- to C-terminus: uncharacterized protein (883 aa).

The interval 258–373 is disordered; sequence INNQSDNQSN…NQFNKPDNEP (116 aa). Low complexity-rich tracts occupy residues 259 to 268, 277 to 317, and 324 to 333; these read NNQSDNQSNS, EPNG…SNSE, and NEPNTEPNTE. Residues 334–347 are compositionally biased toward polar residues; that stretch reads SNGQSNSELNNQSD. Positions 348–368 are enriched in low complexity; sequence NHPNNEPNSEPNNEPNNQFNK.

Belongs to the mimivirus L137 family.

This is an uncharacterized protein from Acanthamoeba polyphaga mimivirus (APMV).